Reading from the N-terminus, the 686-residue chain is MAKKHAGADANDSDYNEEPNFEDPPGFVDTISDEDLLGDMLAQRPSEADGVESVVVVDNIPKVEPVRLEKLKSVINKLFSHCGDIVNVVYPVDEEGKTKGYAFMEYKHASQAEDAVKKLNNHRLDKNHTFAVNLFTDFQKYENIPEKWEPPTIQTFKVQSDLYNFINDPDAYDQYCVAAETAPNCVQVGFWQNTLPEPSELETRERFTDTFVKWSPLGTYVVTFHKPGVAIWGGSNFQKIQKFPHPGTQFVEFSPCENYLVTYGPTPTGQKIIIWDIRTGAEKRSFVADGMSVLSMFRWSHDDKFVARMGENSIHIYETPSFYLLDLKSIKIPGIRGFSWSPTDNVIAYWVEEQNQIPARVTLMEIPKKREIRNKNLFHVADCKLHWQKSGDYLCVKVDRYSKLKKDKKELDVKFLGMFYNFEIFHMREKEIPVDSVEIRELILAFAWEPIGNKFSIIHGEPNSSNVSFYEVNKGVKPSLVKRLEKKSCTHLFWSPRGQFIVMANLTMGTFEFVDSTNDYIISASPDHFRASEVEWDPTGRYVVTGVSSWKVKEDTGFNMYTFQGRIIKRTILKNFVQFLWRPRPPTLLAEEKQKEIKKNLKKYYAVFEQKDRLRLTRASKELLEKRAQLRETFMEYRNKRIAEWKDQKSRRVMLRGHVDTDNLETEEVDEEIVEFLVKEEITLLE.

Positions 1–29 (MAKKHAGADANDSDYNEEPNFEDPPGFVD) are disordered. Residues 11-21 (NDSDYNEEPNF) are compositionally biased toward acidic residues. Residues 53–137 (SVVVVDNIPK…HTFAVNLFTD (85 aa)) enclose the RRM domain. WD repeat units follow at residues 203-242 (TRER…KIQK), 289-327 (DGMS…LLDL), 330-365 (IKIP…TLME), 438-480 (EIRE…KPSL), and 526-571 (PDHF…IKRT). Residues 590 to 642 (AEEKQKEIKKNLKKYYAVFEQKDRLRLTRASKELLEKRAQLRETFMEYRNKRI) are a coiled coil.

The protein belongs to the eIF-3 subunit B family. Component of the eukaryotic translation initiation factor 3 (eIF-3) complex. The eIF-3 complex interacts with pix. Interacts with mxt.

Its subcellular location is the cytoplasm. Functionally, RNA-binding component of the eukaryotic translation initiation factor 3 (eIF-3) complex, which is involved in protein synthesis of a specialized repertoire of mRNAs and, together with other initiation factors, stimulates binding of mRNA and methionyl-tRNAi to the 40S ribosome. The eIF-3 complex specifically targets and initiates translation of a subset of mRNAs involved in cell proliferation. The chain is Eukaryotic translation initiation factor 3 subunit B from Drosophila ananassae (Fruit fly).